Reading from the N-terminus, the 514-residue chain is ATP synthase subunit alpha (514 aa).

Position 170 to 177 (170 to 177 (GDRQTGKT)) interacts with ATP.

The protein belongs to the ATPase alpha/beta chains family. As to quaternary structure, F-type ATPases have 2 components, CF(1) - the catalytic core - and CF(0) - the membrane proton channel. CF(1) has five subunits: alpha(3), beta(3), gamma(1), delta(1), epsilon(1). CF(0) has three main subunits: a(1), b(2) and c(9-12). The alpha and beta chains form an alternating ring which encloses part of the gamma chain. CF(1) is attached to CF(0) by a central stalk formed by the gamma and epsilon chains, while a peripheral stalk is formed by the delta and b chains.

It is found in the cell inner membrane. It carries out the reaction ATP + H2O + 4 H(+)(in) = ADP + phosphate + 5 H(+)(out). In terms of biological role, produces ATP from ADP in the presence of a proton gradient across the membrane. The alpha chain is a regulatory subunit. The polypeptide is ATP synthase subunit alpha (Acidithiobacillus ferrooxidans (strain ATCC 23270 / DSM 14882 / CIP 104768 / NCIMB 8455) (Ferrobacillus ferrooxidans (strain ATCC 23270))).